The primary structure comprises 124 residues: Large ribosomal subunit protein bL21 (124 aa).

This sequence belongs to the bacterial ribosomal protein bL21 family. Part of the 50S ribosomal subunit. Contacts protein L20.

Functionally, this protein binds to 23S rRNA in the presence of protein L20. The sequence is that of Large ribosomal subunit protein bL21 from Sinorhizobium medicae (strain WSM419) (Ensifer medicae).